Reading from the N-terminus, the 60-residue chain is Mastoparan (60 aa).

Positions 1–27 (MKDTILILFTAFIALLGFFGMSAEALA) are cleaved as a signal peptide. AXPX repeat units follow at residues 27–30 (ADPL), 31–34 (ADPS), 35–38 (AGPN), and 41–44 (ADPE). Residues 28-45 (DPLADPSAGPNAEADPEA) constitute a propeptide that is removed on maturation. Leu59 carries the post-translational modification Leucine amide.

It belongs to the MCD family. Mastoparan subfamily. In terms of tissue distribution, expressed by the venom gland.

Its subcellular location is the secreted. It is found in the target cell membrane. In terms of biological role, mast cell degranulating peptide. Its mast cell degranulation activity may be related to the activation of G-protein coupled receptors in mast cells as well as interaction with other proteins located in cell endosomal membranes in the mast cells. Has a membranolytic activity on human glioblastoma multiforme cells (brain tumor cells) that leads to cell necrosis. This is Mastoparan from Vespa orientalis (Oriental hornet).